The sequence spans 31 residues: MTITSTQVYIALLTALIPAFFALKLGKELSK.

A helical transmembrane segment spans residues 7-26 (QVYIALLTALIPAFFALKLG).

It belongs to the PsaM family.

The protein resides in the plastid. It localises to the chloroplast thylakoid membrane. The sequence is that of Photosystem I reaction center subunit XII from Euglena viridis (Cercaria viridis).